The following is a 384-amino-acid chain: MATTTEKTPAAPGVVATESNQAVPAISLEKVSKTYRSGQVTTTAVESIDLEIRQGEFFSLLGPSGCGKTTTMRMIAGFEEPTSGVVRLSGKDVTGVPPNRRDVNMVFQSYALFPHMTVAENVAFGLKRKKVPAAEIRTRVAEMLELVELGDRAKYKPRQLSGGQQQRVALARALVNRPSALLLDEPLGALDLKLRQAMQLELKRIQREVGITFVYVTHDQSEALTMSDRIAVMNKGRIEQLGTPAQIYETPATRFVAGFIGTSNILTGTAQRVSDTLVRIDYGGDQHVLANTPQQMSDLGLVITVRPEKIRLGKDVPDANVSRIRGTVREVVYLGATTHYTVRTVDDTDIVVFQQNSSDASNLADHGDTVWLSWRPEHSYVLPG.

One can recognise an ABC transporter domain in the interval 26-260; that stretch reads ISLEKVSKTY…PATRFVAGFI (235 aa). 62–69 provides a ligand contact to ATP; sequence GPSGCGKT.

Belongs to the ABC transporter superfamily. Spermidine/putrescine importer (TC 3.A.1.11.1) family. In terms of assembly, the complex is composed of two ATP-binding proteins (PotA), two transmembrane proteins (PotB and PotC) and a solute-binding protein (PotD).

The protein resides in the cell membrane. It carries out the reaction ATP + H2O + polyamine-[polyamine-binding protein]Side 1 = ADP + phosphate + polyamineSide 2 + [polyamine-binding protein]Side 1.. In terms of biological role, part of the ABC transporter complex PotABCD involved in spermidine/putrescine import. Responsible for energy coupling to the transport system. This Thermobifida fusca (strain YX) protein is Spermidine/putrescine import ATP-binding protein PotA.